The sequence spans 244 residues: Glucosamine-6-phosphate deaminase (244 aa).

The active-site Proton acceptor; for enolization step is the Asp-67. The active-site For ring-opening step is Asn-136. The Proton acceptor; for ring-opening step role is filled by His-138. Glu-143 serves as the catalytic For ring-opening step.

Belongs to the glucosamine/galactosamine-6-phosphate isomerase family. NagB subfamily.

It catalyses the reaction alpha-D-glucosamine 6-phosphate + H2O = beta-D-fructose 6-phosphate + NH4(+). It functions in the pathway amino-sugar metabolism; N-acetylneuraminate degradation; D-fructose 6-phosphate from N-acetylneuraminate: step 5/5. In terms of biological role, catalyzes the reversible isomerization-deamination of glucosamine 6-phosphate (GlcN6P) to form fructose 6-phosphate (Fru6P) and ammonium ion. This Clostridium botulinum (strain 657 / Type Ba4) protein is Glucosamine-6-phosphate deaminase.